A 317-amino-acid chain; its full sequence is Melanocyte-stimulating hormone receptor (317 aa).

Over 1-37 (MRVQGSQRRLLGSLNSTPTATPHLGLAANQTGARCLE) the chain is Extracellular. Asn29 is a glycosylation site (N-linked (GlcNAc...) asparagine). The chain crosses the membrane as a helical span at residues 38-63 (VSIPDGLFLSLGLVSLVENVLVVTAI). The Cytoplasmic segment spans residues 64-72 (AKNRNLHSP). Residues 73-93 (MYCFICCLALSDLLVSGSNML) traverse the membrane as a helical segment. Topologically, residues 94–118 (ETAVTLLLEAGALAARAAVVQQLDN) are extracellular. Residues 119-140 (VIDVITCSSMLSSLCFLGAIAV) traverse the membrane as a helical segment. The Cytoplasmic portion of the chain corresponds to 141 to 163 (DRYISIFYALRYHSIVTLPRARR). A helical membrane pass occupies residues 164–183 (AIAAIWVASVLCSTLFIAYY). Topologically, residues 184-191 (DHAAVLLC) are extracellular. The helical transmembrane segment at 192 to 211 (LVVFFLAMLVLMAVLYVHML) threads the bilayer. The Cytoplasmic segment spans residues 212–240 (ARACQHAQGIARLHKRQRLAHQGFGLKGA). The chain crosses the membrane as a helical span at residues 241-266 (ATLTILLGIFFLCWGPFFLHLTLIVL). Residues 267-279 (CPQHPTCSCIFKN) lie on the Extracellular side of the membrane. A helical membrane pass occupies residues 280–300 (FNLFLALIICNAIIDPLIYAF). The Cytoplasmic portion of the chain corresponds to 301-317 (RSQELRRTLKEVLLCSW). A lipid anchor (S-palmitoyl cysteine) is attached at Cys315.

The protein belongs to the G-protein coupled receptor 1 family. As to quaternary structure, interacts with MGRN1, but does not undergo MGRN1-mediated ubiquitination; this interaction competes with GNAS-binding and thus inhibits agonist-induced cAMP production. Interacts with OPN3; the interaction results in a decrease in MC1R-mediated cAMP signaling and ultimately a decrease in melanin production in melanocytes.

It is found in the cell membrane. Its function is as follows. Receptor for MSH (alpha, beta and gamma) and ACTH. The activity of this receptor is mediated by G proteins which activate adenylate cyclase. Mediates melanogenesis, the production of eumelanin (black/brown) and phaeomelanin (red/yellow), via regulation of cAMP signaling in melanocytes. In Macaca nigra (Celebes black macaque), this protein is Melanocyte-stimulating hormone receptor (MC1R).